The primary structure comprises 487 residues: Cobyric acid synthase (487 aa).

Residues 251–439 enclose the GATase cobBQ-type domain; the sequence is KLKVVAPAYP…CHGVLDHPEA (189 aa). Residue Cys332 is the Nucleophile of the active site. His431 is an active-site residue.

It belongs to the CobB/CobQ family. CobQ subfamily.

It functions in the pathway cofactor biosynthesis; adenosylcobalamin biosynthesis. Catalyzes amidations at positions B, D, E, and G on adenosylcobyrinic A,C-diamide. NH(2) groups are provided by glutamine, and one molecule of ATP is hydrogenolyzed for each amidation. The chain is Cobyric acid synthase from Dechloromonas aromatica (strain RCB).